The following is a 635-amino-acid chain: MINISFPDGSIKQFAKNITAYEVANAISMSLAKAAMVAEINGELQDLSIVIDNDCKLRILTAKDPECLEIIRHDAAHLTAEAVKELFPETQVTIGPAIENGYYYDFARDKPFTTDDLAVIEAKMQELSQKNEQVTRELWDRDKAVEFFKSIGEHYKAEIIASIPAGEPITLYRQGNFIDLCRGPHAPSTGVVKHFKLMKVAGAYWRGDSRNEMLQRIYGTAWATKEQLDSYLLMLEEAEKRDHRKLGRELDLFHFQEEAQGMVFWHDKGWSIYNTIEQYIRKKIRKNGYTEVKTPVLVDKSLWEASGHWEKFRDDMFALETDDKTLALKPMNCPCHVQIFKQGIKSYRDLPLRMSEFGLCHRNEASGALHGLMRVRSLVQDDAHIFCAAEQITDETVSFCKLLTEVYKDFGFTDIKVKFSDRPEIRAGSNEVWDKAENALKEAVEQAGFNYTLNPGEGAFYGPKLEFVLTDAIGRQWQCGTLQMDFVLPERLDASYVAASGEKKRPVMLHRAILGSLERFIGILIEEYAGRFPLWLAPVQVAIATITSDLNDYALEVQKALIDNGIRTDFNISPDKINYKIREFSNQKIPMIAVIGKQEQENKQVAIRRLGTTDQEVLSVEQLIAVVKEENEKYL.

One can recognise a TGS domain in the interval 1–61 (MINISFPDGS…DNDCKLRILT (61 aa)). A catalytic region spans residues 242–533 (DHRKLGRELD…LIEEYAGRFP (292 aa)). The Zn(2+) site is built by Cys-333, His-384, and His-510.

This sequence belongs to the class-II aminoacyl-tRNA synthetase family. Homodimer. Requires Zn(2+) as cofactor.

Its subcellular location is the cytoplasm. It carries out the reaction tRNA(Thr) + L-threonine + ATP = L-threonyl-tRNA(Thr) + AMP + diphosphate + H(+). Functionally, catalyzes the attachment of threonine to tRNA(Thr) in a two-step reaction: L-threonine is first activated by ATP to form Thr-AMP and then transferred to the acceptor end of tRNA(Thr). Also edits incorrectly charged L-seryl-tRNA(Thr). This is Threonine--tRNA ligase from Rickettsia africae (strain ESF-5).